We begin with the raw amino-acid sequence, 151 residues long: FIS1-related protein fis-2 (151 aa).

The chain crosses the membrane as a helical span at residues 126-146 (LIGAAIVGGGALALAGLVAIF).

Belongs to the FIS1 family.

It is found in the mitochondrion outer membrane. It localises to the peroxisome membrane. The protein localises to the mitochondrion. Functionally, involved in the fragmentation of the mitochondrial network. Involved in perinuclear clustering of the mitochondrial network. May act, redundantly with fis-1, downstream of mitochondrial fission, before the fission products participate in mitochondrial homeostasis, mitophagy, or apoptosis. Plays a role in apoptosis by promoting mitochondrial elimination and cell-death execution, acting downstream of caspase ced-3, and perhaps independently of dynamin GTPase drp-1, caspase ced-9 and apoptosis-inducing factor AIFM/wah-1. The chain is FIS1-related protein fis-2 from Caenorhabditis elegans.